The chain runs to 445 residues: Transmembrane protein 184C (445 aa).

The next 7 membrane-spanning stretches (helical) occupy residues 15–35 (LVVL…VWEL), 46–66 (AWFI…WGIL), 84–104 (ILWM…YPNI), 177–197 (YTVV…VGVY), 210–230 (YLVI…VLFY), 252–272 (VVFV…VGVI), and 285–305 (AVAT…AAIA). Disordered stretches follow at residues 369-393 (EHTS…SSPM) and 421-445 (TSAT…LDRS). The span at 370–390 (HTSLLSSSTQDPISDASSMPS) shows a compositional bias: polar residues.

It belongs to the TMEM184 family.

It is found in the membrane. Functionally, may play a role in cell growth. This Gallus gallus (Chicken) protein is Transmembrane protein 184C (TMEM184C).